The sequence spans 381 residues: Gustatory and pheromone receptor 39a, isoform D (381 aa).

At 1–43 (MKRNAFEELRVQLRTLKWLGVLRFTIDFNKCLVRENASEERSA) the chain is on the cytoplasmic side. Residues 44–64 (WLYLIGVVGITCSLIVYSTYF) traverse the membrane as a helical segment. Over 65–78 (PSHFIMGKHNTTGN) the chain is Extracellular. N-linked (GlcNAc...) asparagine glycosylation is present at Asn-74. A helical transmembrane segment spans residues 79 to 101 (CYALINIRSCSIVTMLIYTQLYI). Residues 102-128 (QRFRFVALLQSILRFNQISGSHREEGR) are Cytoplasmic-facing. Residues 129–149 (FAFYYYTHLSLLIICMLNYAY) form a helical membrane-spanning segment. Topologically, residues 150–172 (GYWTAGVRLTTIPIYLLQYGFSY) are extracellular. The chain crosses the membrane as a helical span at residues 173 to 193 (LFLGQVVVLFACIQQILLSIL). Residues 194 to 234 (KYYNQVVLKNIKSSKESREFYYNFCKYNQVIWLSYTEINHC) are Cytoplasmic-facing. A helical transmembrane segment spans residues 235-255 (FGLLLLLVTGLILLITPSGPF). The Extracellular portion of the chain corresponds to 256–273 (YLVSTIFEGRFRQNWQFS). A helical transmembrane segment spans residues 274–294 (LMSFTAILWSLPWIVLLVLAM). The Cytoplasmic portion of the chain corresponds to 295 to 350 (GRNDVQKEANKTAKMLTKVPRTGTGLDRMIEKFLLKNLRQKPILTAYGFFALDKST). A helical membrane pass occupies residues 351-371 (LFKLFTAIFTYMVILVQFKEM). Topologically, residues 372–381 (ENSTKSINKF) are extracellular. The N-linked (GlcNAc...) asparagine glycan is linked to Asn-373.

This sequence belongs to the insect chemoreceptor superfamily. Gustatory receptor (GR) family. Gr21a subfamily. Expressed in the adult labellar chemosensory neurons and adult thorax and abdomen.

The protein resides in the cell membrane. Gustatory receptor which mediates acceptance or avoidance behavior, depending on its substrates. Plays a role in sustaining courtship behavior in males, possibly through the reception of a stimulating arrestant pheromone. In Drosophila melanogaster (Fruit fly), this protein is Gustatory and pheromone receptor 39a, isoform D (Gr39a).